The primary structure comprises 84 residues: Small ribosomal subunit protein uS17 (84 aa).

The protein belongs to the universal ribosomal protein uS17 family. As to quaternary structure, part of the 30S ribosomal subunit.

Functionally, one of the primary rRNA binding proteins, it binds specifically to the 5'-end of 16S ribosomal RNA. In Treponema pallidum (strain Nichols), this protein is Small ribosomal subunit protein uS17.